The primary structure comprises 131 residues: Profilin LP04 (131 aa).

It belongs to the profilin family. Occurs in many kinds of cells as a complex with monomeric actin in a 1:1 ratio.

It is found in the cytoplasm. The protein localises to the cytoskeleton. In terms of biological role, binds to actin and affects the structure of the cytoskeleton. At high concentrations, profilin prevents the polymerization of actin, whereas it enhances it at low concentrations. By binding to PIP2, it inhibits the formation of IP3 and DG. This is Profilin LP04 from Oryza sativa subsp. indica (Rice).